The primary structure comprises 800 residues: Phosphate transporter PHO1 homolog 9 (800 aa).

The SPX domain occupies 1–346 (MKFGREFETQ…SRNASKPYLN (346 aa)). At 1–398 (MKFGREFETQ…KTKREKHRIT (398 aa)) the chain is on the cytoplasmic side. Disordered stretches follow at residues 38-77 (QKQQ…PGLS), 91-119 (NRAS…HNHH), and 212-234 (PDLN…PAPS). Over residues 42-51 (RPPPPPPPPS) the composition is skewed to pro residues. Residues 63–75 (GEGGGGGGGGGPG) are compositionally biased toward gly residues. Residues 95–119 (RSPKKSHKHHNPLSSKRHHHHHNHH) show a composition bias toward basic residues. Residues 216–229 (SVASAPSSPHSTMR) show a composition bias toward polar residues. A helical transmembrane segment spans residues 399–419 (YFLGFFSGCAVALAIAITVLV). At 420–439 (HIRGLTKSEGRHQYMENIFP) the chain is on the extracellular side. A helical membrane pass occupies residues 440 to 460 (LYSLFGFVAVHLFMYAADIYF). Residues 461–483 (WSRYRVNYPFIFGFEQGNDLGYR) lie on the Cytoplasmic side of the membrane. A helical transmembrane segment spans residues 484-504 (EVLLVGSGLAVLTFGGVISNL). Topologically, residues 505–520 (DMEMDPRTKSFSVITE) are extracellular. A helical membrane pass occupies residues 521 to 541 (LVPLALLVCLMMVLFCPFNII). Over 542 to 670 (YRSSRYFFVG…IFEMKRGTYW (129 aa)) the chain is Cytoplasmic. An EXS domain is found at 606 to 800 (YDSEIYKELY…FQELGGSKSV (195 aa)). The chain crosses the membrane as a helical span at residues 671–691 (LTVAVTTSSIATLFNTYWDIF). The Extracellular segment spans residues 692 to 718 (RDWGLMNRNSKNPWLRDKLLVPYKSIY). Residues 719–739 (FIVMVANVVLRLAWMQTVLGI) form a helical membrane-spanning segment. The Cytoplasmic portion of the chain corresponds to 740–800 (KEAPFLHKRA…FQELGGSKSV (61 aa)).

It belongs to the SYG1 (TC 2.A.94) family. In terms of tissue distribution, specifically expressed in pollen grains.

The protein localises to the cell membrane. May transport inorganic phosphate (Pi). The chain is Phosphate transporter PHO1 homolog 9 (PHO1-H9) from Arabidopsis thaliana (Mouse-ear cress).